Consider the following 145-residue polypeptide: Ribonuclease VapC48 (145 aa).

Mg(2+) contacts are provided by aspartate 6 and aspartate 109. The region spanning 15–141 (HRASPFHDKA…RKFEGIRIRD (127 aa)) is the PINc domain.

The protein belongs to the PINc/VapC protein family. Requires Mg(2+) as cofactor.

Toxic component of a type II toxin-antitoxin (TA) system. An RNase. Its cognate antitoxin is VapB48. This Mycobacterium tuberculosis (strain CDC 1551 / Oshkosh) protein is Ribonuclease VapC48.